Here is a 939-residue protein sequence, read N- to C-terminus: MSRIRIYELAKEAGMSGKAFADKLIKKGYQIKGHSSTVDDATADEIRRTFLGTKESGQDTGQATNEAAAAHRPTTVIGGKKVDEPVVPEKIVEEVQAVSVEVPKEVVAEEVKKSEPVKAEKSEPVIQEVAPVVEELVTNKEAPTAPLEREEESQLKAQKPTIEKEESAAVAKPEVVSAGSNEKKAGAPEIKRAEHTETVEKSKTAVDSKKVATPASTDKKVKPAQQPYRSGGVRVIGRVELPIQREEPSRPRRKPTRPPVNRSPRPSTPSPNRSAGGPPKPAAPATPAQDDSRNRKKKGRRDEKPAERDSRPKAKGKKGVKFTHFGTDYQNRGRRPRRGKRDAQTLPPSEMKASKKHVKVYDTITVGDLAGRMKVKASDVIGKLMGLGLMATINQSVDIDTATLIATEYGYEVDQGITDELGIQLLTEAEEGGIEVGRCPVVTVMGHVDHGKTSILDAIRKTDVADGEAGGITQHIGAYHVKAASGDVTFVDTPGHAAFTEMRSRGAQVTDIVILVVAADDGVMDQTREAIRHSQAANVPIIVAVNKIDKDNADVERVKRELAELDLSPEEWGGTTMYCETSAKQQIGIDELMESVQLAAEMLELKANPDRKVIGRVLEAQLDKGRGPVATILVQAGTLAKGDHFVVGQHSGKVRAMLDYRGRSLAEAGPSIPVEVQGLSGVPSAGDEFVVVTDEKMAKAVSHDRAMKAREAELGASTKISLDKLFEQMSEGEVRELRVVLRADVQGTLEAFAKAAADLSTKAIKVRLLHEGTGTITDSDILLASASDAIIIGFNVRPSAKVKALADKEHVDVRSYDVIYHALDDIRDAMVGMLDPTFEEEIIGDAEVRDIFSVPKIGVIGGCYVTSGKIQRNAGVRVLREGVVLYTGKIGSLRRFKDDAKEVASGYECGIGVENFNNIKIGDVLEAFIMNEVAATLGE.

Disordered regions lie at residues 51–81 (LGTK…GGKK) and 137–353 (VTNK…EMKA). Residues 181–210 (NEKKAGAPEIKRAEHTETVEKSKTAVDSKK) show a composition bias toward basic and acidic residues. Residues 259–277 (PVNRSPRPSTPSPNRSAGG) show a composition bias toward low complexity. Residues 300-312 (RRDEKPAERDSRP) show a composition bias toward basic and acidic residues. The 170-residue stretch at 437-606 (GRCPVVTVMG…QLAAEMLELK (170 aa)) folds into the tr-type G domain. The interval 446–453 (GHVDHGKT) is G1. A GTP-binding site is contributed by 446–453 (GHVDHGKT). The G2 stretch occupies residues 471-475 (GITQH). The segment at 492 to 495 (DTPG) is G3. Residues 492–496 (DTPGH) and 546–549 (NKID) contribute to the GTP site. The G4 stretch occupies residues 546–549 (NKID). Positions 582–584 (SAK) are G5.

It belongs to the TRAFAC class translation factor GTPase superfamily. Classic translation factor GTPase family. IF-2 subfamily.

It is found in the cytoplasm. Functionally, one of the essential components for the initiation of protein synthesis. Protects formylmethionyl-tRNA from spontaneous hydrolysis and promotes its binding to the 30S ribosomal subunits. Also involved in the hydrolysis of GTP during the formation of the 70S ribosomal complex. The sequence is that of Translation initiation factor IF-2 from Desulfotalea psychrophila (strain LSv54 / DSM 12343).